Here is a 124-residue protein sequence, read N- to C-terminus: MGSSSEASFRSAQASCSGARRQGLGRGDQNLSVMPPNGRAQTHTPGWVSDPLVLGAQVHGGCRGIEALSVSSGSWSSATVWILTGLGLGLSRPFLPGATVLRDRPLGSAFELSYDQKKAPLRLQ.

Positions 1 to 16 (MGSSSEASFRSAQASC) are enriched in polar residues. Residues 1–46 (MGSSSEASFRSAQASCSGARRQGLGRGDQNLSVMPPNGRAQTHTPG) are disordered.

As to expression, only found to be expressed in thymus.

It localises to the mitochondrion. Functionally, may play an important role in mediating p53/TP53-dependent apoptosis. The sequence is that of p53-regulated apoptosis-inducing protein 1 (TP53AIP1) from Homo sapiens (Human).